Here is a 275-residue protein sequence, read N- to C-terminus: Large ribosomal subunit protein uL2 (275 aa).

Residues 223–275 (VAMNPVDHPHGGGEGRTGEAREPVSPWGTPSKGFKTRRNKRTNNMIVQRRKRK) form a disordered region. Basic and acidic residues predominate over residues 229-244 (DHPHGGGEGRTGEARE).

It belongs to the universal ribosomal protein uL2 family. In terms of assembly, part of the 50S ribosomal subunit. Forms a bridge to the 30S subunit in the 70S ribosome.

One of the primary rRNA binding proteins. Required for association of the 30S and 50S subunits to form the 70S ribosome, for tRNA binding and peptide bond formation. It has been suggested to have peptidyltransferase activity; this is somewhat controversial. Makes several contacts with the 16S rRNA in the 70S ribosome. The chain is Large ribosomal subunit protein uL2 from Bordetella petrii (strain ATCC BAA-461 / DSM 12804 / CCUG 43448).